The chain runs to 506 residues: Ent-kaurenoic acid oxidase (506 aa).

The chain crosses the membrane as a helical span at residues 11 to 31; that stretch reads AWAAGDLWVLAAAVVAGVVLV. A heme-binding site is contributed by C451.

Belongs to the cytochrome P450 family. Requires heme as cofactor. Expressed in roots and panicles. Expressed at low levels in vegetative shoot apices, leaf sheaths, leaf blades and stems.

Its subcellular location is the endoplasmic reticulum membrane. The catalysed reaction is ent-kaur-16-en-19-oate + 3 reduced [NADPH--hemoprotein reductase] + 3 O2 = gibberellin A12 + 3 oxidized [NADPH--hemoprotein reductase] + 4 H2O + 4 H(+). The enzyme catalyses ent-kaur-16-en-19-oate + reduced [NADPH--hemoprotein reductase] + O2 = ent-7alpha-hydroxykaur-16-en-19-oate + oxidized [NADPH--hemoprotein reductase] + H2O + H(+). It catalyses the reaction ent-7alpha-hydroxykaur-16-en-19-oate + reduced [NADPH--hemoprotein reductase] + O2 = gibberellin A12 aldehyde + oxidized [NADPH--hemoprotein reductase] + 2 H2O + H(+). It carries out the reaction gibberellin A12 aldehyde + reduced [NADPH--hemoprotein reductase] + O2 = gibberellin A12 + oxidized [NADPH--hemoprotein reductase] + H2O + 2 H(+). It functions in the pathway plant hormone biosynthesis; gibberellin biosynthesis. Its function is as follows. Involved in gibberellin (GA) biosynthesis. Catalyzes three successive oxidations of ent-kaurenoic acid giving gibberellin 12 (GA12), a key step in GAs biosynthesis. GAs, which are involved many processes, including stem elongation, play a central role in plant development. Required for pollen germination and elongation. The protein is Ent-kaurenoic acid oxidase of Oryza sativa subsp. japonica (Rice).